Reading from the N-terminus, the 199-residue chain is Probable nicotinate-nucleotide adenylyltransferase (199 aa).

This sequence belongs to the NadD family.

It carries out the reaction nicotinate beta-D-ribonucleotide + ATP + H(+) = deamido-NAD(+) + diphosphate. Its pathway is cofactor biosynthesis; NAD(+) biosynthesis; deamido-NAD(+) from nicotinate D-ribonucleotide: step 1/1. In terms of biological role, catalyzes the reversible adenylation of nicotinate mononucleotide (NaMN) to nicotinic acid adenine dinucleotide (NaAD). In Rhizobium johnstonii (strain DSM 114642 / LMG 32736 / 3841) (Rhizobium leguminosarum bv. viciae), this protein is Probable nicotinate-nucleotide adenylyltransferase.